Here is a 92-residue protein sequence, read N- to C-terminus: Large ribosomal subunit protein eL43z (92 aa).

Residues Cys-39–Cys-60 form a C4-type zinc finger.

Belongs to the eukaryotic ribosomal protein eL43 family.

The polypeptide is Large ribosomal subunit protein eL43z (Oryza sativa subsp. japonica (Rice)).